The chain runs to 1336 residues: DNA-directed RNA polymerase subunit beta' (1336 aa).

Cysteine 60, cysteine 62, cysteine 75, and cysteine 78 together coordinate Zn(2+). Mg(2+) is bound by residues aspartate 535, aspartate 537, and aspartate 539. 4 residues coordinate Zn(2+): cysteine 902, cysteine 984, cysteine 991, and cysteine 994.

The protein belongs to the RNA polymerase beta' chain family. The RNAP catalytic core consists of 2 alpha, 1 beta, 1 beta' and 1 omega subunit. When a sigma factor is associated with the core the holoenzyme is formed, which can initiate transcription. Mg(2+) is required as a cofactor. The cofactor is Zn(2+).

It carries out the reaction RNA(n) + a ribonucleoside 5'-triphosphate = RNA(n+1) + diphosphate. Functionally, DNA-dependent RNA polymerase catalyzes the transcription of DNA into RNA using the four ribonucleoside triphosphates as substrates. This is DNA-directed RNA polymerase subunit beta' from Corynebacterium diphtheriae (strain ATCC 700971 / NCTC 13129 / Biotype gravis).